An 853-amino-acid polypeptide reads, in one-letter code: DNA mismatch repair protein MutS (853 aa).

614-621 (GPNMGGKS) is an ATP binding site.

This sequence belongs to the DNA mismatch repair MutS family.

This protein is involved in the repair of mismatches in DNA. It is possible that it carries out the mismatch recognition step. This protein has a weak ATPase activity. This Escherichia coli O157:H7 (strain EC4115 / EHEC) protein is DNA mismatch repair protein MutS.